The primary structure comprises 272 residues: 2-dehydro-3-deoxyphosphooctonate aldolase (272 aa).

Belongs to the KdsA family.

Its subcellular location is the cytoplasm. It carries out the reaction D-arabinose 5-phosphate + phosphoenolpyruvate + H2O = 3-deoxy-alpha-D-manno-2-octulosonate-8-phosphate + phosphate. It functions in the pathway carbohydrate biosynthesis; 3-deoxy-D-manno-octulosonate biosynthesis; 3-deoxy-D-manno-octulosonate from D-ribulose 5-phosphate: step 2/3. Its pathway is bacterial outer membrane biogenesis; lipopolysaccharide biosynthesis. The sequence is that of 2-dehydro-3-deoxyphosphooctonate aldolase from Pelobacter propionicus (strain DSM 2379 / NBRC 103807 / OttBd1).